We begin with the raw amino-acid sequence, 66 residues long: uncharacterized protein (66 aa).

Residues 1 to 21 (MPGGDRTGPWGQGPRTGRRAG) form a disordered region.

This is an uncharacterized protein from Archaeoglobus fulgidus (strain ATCC 49558 / DSM 4304 / JCM 9628 / NBRC 100126 / VC-16).